The primary structure comprises 559 residues: MEASSPLDPVGRLVAFCRGGVHLAVLLLFLSPSTLGQCPAPPLFPYAKPINPTDESTFPVGTSLKYECRPGYIKRQFSITCEVNSVWTSPQDVCIRKQCETPLDPQNGIVHVNTDIRFGSSITYTCNEGYRLIGSSSAMCIISDQSVAWDAEAPICESIPCEIPPSIPNGDFFSPNREDFHYGMVVTYQCNTDARGKKLFNLVGEPSIHCTSIDGQVGVWSGPPPQCIELNKCTPPHVENAVIVSKNKSLFSLRDMVEFRCQDGFMMKGDSSVYCRSLNRWEPQLPSCFKVKSCGAFLGELPNGHVFVPQNLQLGAKVTFVCNTGYQLKGNSSSHCVLDGVESIWNSSVPVCEQVICKLPQDMSGFQKGLQMKKDYYYGDNVALECEDGYTLEGSSQSQCQSDASWDPPLPKCVSQVICKLPQDMSGFQKGLQMKKDYYYGDNVALECEDGYTLEGSSQSQCQSDASWDPPLPKCVSRSNSGLIAGIFIGIIVLILFIIFSYWMIMKFKKRNSTNEKCKEVGIYLNSKEDSCVQPQSLLTSQENNSTSSPARNSLTQEV.

The first 35 residues, 1 to 35, serve as a signal peptide directing secretion; sequence MEASSPLDPVGRLVAFCRGGVHLAVLLLFLSPSTL. Sushi domains lie at 36–96, 97–158, 159–229, 231–290, 292–354, 355–415, and 417–477; these read GQCP…VCIR, KQCE…ICES, IPCE…QCIE, NKCT…SCFK, KSCG…VCEQ, and VICK…KCVS. Residues 36 to 482 lie on the Extracellular side of the membrane; sequence GQCPAPPLFP…PKCVSRSNSG (447 aa). Disulfide bonds link Cys-38-Cys-81, Cys-68-Cys-94, Cys-99-Cys-140, Cys-126-Cys-156, Cys-161-Cys-210, Cys-190-Cys-227, Cys-233-Cys-275, Cys-261-Cys-288, Cys-294-Cys-336, Cys-322-Cys-352, Cys-357-Cys-400, Cys-386-Cys-413, Cys-419-Cys-462, and Cys-448-Cys-475. Residue Thr-53 is glycosylated (O-linked (GalNAc...) threonine). Asn-331 carries N-linked (GlcNAc...) asparagine glycosylation. A helical transmembrane segment spans residues 483-503; the sequence is LIAGIFIGIIVLILFIIFSYW. The Cytoplasmic portion of the chain corresponds to 504–559; sequence MIMKFKKRNSTNEKCKEVGIYLNSKEDSCVQPQSLLTSQENNSTSSPARNSLTQEV. Phosphoserine occurs at positions 527, 531, and 537. The segment at 535–559 is disordered; it reads PQSLLTSQENNSTSSPARNSLTQEV. At Thr-540 the chain carries Phosphothreonine. Ser-554 carries the post-translational modification Phosphoserine.

It belongs to the receptors of complement activation (RCA) family. In terms of assembly, interacts with C3b.

The protein resides in the membrane. In terms of biological role, acts as a cofactor for complement factor I, a serine protease which protects autologous cells against complement-mediated injury by cleaving C3b and C4b deposited on host tissue. Also acts as a decay-accelerating factor, preventing the formation of C4b2a and C3bBb, the amplification convertases of the complement cascade. Seems to act as a costimulatory factor for T-cells. May play a crucial role in early embryonic development by maintaining fetomaternal tolerance. The sequence is that of Complement component receptor 1-like protein (Cr1l) from Rattus norvegicus (Rat).